We begin with the raw amino-acid sequence, 359 residues long: Putative cyclin-F1-2 (359 aa).

This sequence belongs to the cyclin family. Cyclin F subfamily.

The chain is Putative cyclin-F1-2 (CYCF1-2) from Oryza sativa subsp. japonica (Rice).